Here is a 282-residue protein sequence, read N- to C-terminus: Para-Rep C1 (282 aa).

Residues 1 to 99 (MASKRWCFTL…ETLISEIGAP (99 aa)) enclose the CRESS-DNA virus Rep endonuclease domain. Positions 7-10 (CFTL) match the RCR-1 motif. Glutamate 38 and histidine 47 together coordinate a divalent metal cation. Residues 47–49 (HLQ) carry the RCR-2 motif. The Nuclear localization signal motif lies at 56 to 77 (KMIRLGGLKKKFGYRAHWEIAK). The active-site For DNA cleavage activity is tyrosine 86. Positions 86–89 (YCTK) match the RCR-3 motif. Residue serine 94 coordinates a divalent metal cation. Residue 174–182 (GSDGGEGKS) participates in ATP binding.

This sequence belongs to the nanoviridea/circoviridae replication-associated protein family. In terms of assembly, homooligomer (Potential). Rep binds to repeated DNA motifs (iterons). It depends on Mg(2+) as a cofactor. The cofactor is Mn(2+).

The protein localises to the host nucleus. It catalyses the reaction ATP + H2O = ADP + phosphate + H(+). Its function is as follows. Initiates and terminates the replication only of its own subviral DNA molecule. The closed circular ssDNA genome is first converted to a superhelical dsDNA. Rep binds a specific hairpin at the genome origin of replication. Introduces an endonucleolytic nick within the intergenic region of the genome, thereby initiating the rolling circle replication (RCR). Following cleavage, binds covalently to the 5'-phosphate of DNA as a tyrosyl ester. The cleavage gives rise to a free 3'-OH that serves as a primer for the cellular DNA polymerase. The polymerase synthesizes the (+) strand DNA by rolling circle mechanism. After one round of replication, a Rep-catalyzed nucleotidyl transfer reaction releases a circular single-stranded virus genome, thereby terminating the replication. Displays origin-specific DNA cleavage, nucleotidyl transferase, ATPase and helicase activities. This Faba bean necrotic yellows C11 alphasatellite (FBNYC11A) protein is Para-Rep C1 (C1).